Consider the following 750-residue polypeptide: Photosystem I P700 chlorophyll a apoprotein A1 (750 aa).

Transmembrane regions (helical) follow at residues 70 to 93 (VFSA…FHGA), 156 to 179 (LYCT…FHYH), 195 to 219 (LNHH…HVSL), 291 to 309 (IAHH…GHMY), 346 to 369 (WHAQ…HHMY), 385 to 411 (LSLF…IFMV), 433 to 455 (AIIS…LYIH), and 531 to 549 (FLVH…LILL). 2 residues coordinate [4Fe-4S] cluster: Cys-573 and Cys-582. A run of 2 helical transmembrane segments spans residues 589–610 (HVFL…HFSW) and 664–686 (LSAY…MFLF). His-675 contacts chlorophyll a'. Met-683 and Tyr-691 together coordinate chlorophyll a. Trp-692 contacts phylloquinone. Residues 724-744 (AVGVTHYLLGGIATTWAFFLA) form a helical membrane-spanning segment.

Belongs to the PsaA/PsaB family. As to quaternary structure, the PsaA/B heterodimer binds the P700 chlorophyll special pair and subsequent electron acceptors. PSI consists of a core antenna complex that captures photons, and an electron transfer chain that converts photonic excitation into a charge separation. The eukaryotic PSI reaction center is composed of at least 11 subunits. P700 is a chlorophyll a/chlorophyll a' dimer, A0 is one or more chlorophyll a, A1 is one or both phylloquinones and FX is a shared 4Fe-4S iron-sulfur center. serves as cofactor.

It is found in the plastid. It localises to the chloroplast thylakoid membrane. The catalysed reaction is reduced [plastocyanin] + hnu + oxidized [2Fe-2S]-[ferredoxin] = oxidized [plastocyanin] + reduced [2Fe-2S]-[ferredoxin]. Its function is as follows. PsaA and PsaB bind P700, the primary electron donor of photosystem I (PSI), as well as the electron acceptors A0, A1 and FX. PSI is a plastocyanin-ferredoxin oxidoreductase, converting photonic excitation into a charge separation, which transfers an electron from the donor P700 chlorophyll pair to the spectroscopically characterized acceptors A0, A1, FX, FA and FB in turn. Oxidized P700 is reduced on the lumenal side of the thylakoid membrane by plastocyanin. This is Photosystem I P700 chlorophyll a apoprotein A1 from Calycanthus floridus var. glaucus (Eastern sweetshrub).